We begin with the raw amino-acid sequence, 346 residues long: [LysW]-lysine/[LysW]-ornithine hydrolase (346 aa).

Residue His68 coordinates Zn(2+). Asp70 is an active-site residue. Residue Asp92 participates in Zn(2+) binding. Catalysis depends on Glu122, which acts as the Proton acceptor. Zn(2+) is bound by residues Glu123, Glu146, and His317.

Belongs to the peptidase M20A family. LysK subfamily. It depends on Zn(2+) as a cofactor. Requires Co(2+) as cofactor.

The protein localises to the cytoplasm. The catalysed reaction is [amino-group carrier protein]-C-terminal-gamma-(L-lysyl)-L-glutamate + H2O = [amino-group carrier protein]-C-terminal-L-glutamate + L-lysine. It catalyses the reaction [amino-group carrier protein]-C-terminal-gamma-(L-ornithyl)-L-glutamate + H2O = [amino-group carrier protein]-C-terminal-L-glutamate + L-ornithine. It participates in amino-acid biosynthesis; L-lysine biosynthesis via AAA pathway; L-lysine from L-alpha-aminoadipate (Thermus route): step 5/5. It functions in the pathway amino-acid biosynthesis; L-arginine biosynthesis. Catalyzes the release of L-lysine from [LysW]-gamma-L-lysine and the release of L-ornithine from [LysW]-L-ornithine. This is [LysW]-lysine/[LysW]-ornithine hydrolase from Saccharolobus islandicus (strain Y.N.15.51 / Yellowstone #2) (Sulfolobus islandicus).